The chain runs to 312 residues: Putative olfactory receptor 1F2 (312 aa).

The Extracellular portion of the chain corresponds to 1-25; that stretch reads MERDKPVSVSEFLLLGLSRQPQQQH. The helical transmembrane segment at 26–49 threads the bilayer; that stretch reads LLFVFFLSMYLATVLGNLLIILAI. Topologically, residues 50-57 are cytoplasmic; it reads SIDSRLHT. Residues 58–78 traverse the membrane as a helical segment; it reads PMYFFLSNMSFVDNCFSTTVP. Residues 79-99 lie on the Extracellular side of the membrane; the sequence is KMLANHILRTQTISFSGCLMQ. An intrachain disulfide couples Cys96 to Cys188. A helical transmembrane segment spans residues 100–119; sequence MYFISELADMDNFLLAVMAY. Residues 120–138 lie on the Cytoplasmic side of the membrane; the sequence is DRFVAVCRPLHYTAKMIHQ. Residues 139-157 form a helical membrane-spanning segment; that stretch reads LCALLVTGSWVVANSNALL. The Extracellular segment spans residues 158-195; sequence HTLLMARLSFCADNTIPHIFCDVTPLLKLSCSDTHLSE. The chain crosses the membrane as a helical span at residues 196–218; that stretch reads VMILTEAALVTITPFLCLLASYM. The Cytoplasmic segment spans residues 219 to 235; it reads HITCVVLRVPSTKGRWK. Residues 236–258 traverse the membrane as a helical segment; that stretch reads AFSTCGSHLAVVLLFYGTIMSPY. Topologically, residues 259–271 are extracellular; sequence FRTSSSHSAQRDI. The chain crosses the membrane as a helical span at residues 272–291; the sequence is AAAVRFTVVTPVMNPLIYSL. Over 292-312 the chain is Cytoplasmic; that stretch reads RNKDIKGALVKVVAVKFFSVQ.

It belongs to the G-protein coupled receptor 1 family.

The protein resides in the cell membrane. In terms of biological role, odorant receptor. The protein is Putative olfactory receptor 1F2 (OR1F2P) of Homo sapiens (Human).